Consider the following 380-residue polypeptide: Cytochrome b (380 aa).

The next 4 membrane-spanning stretches (helical) occupy residues 33–53, 77–98, 113–133, and 178–198; these read FGSL…FLAM, WLIR…YLHI, WNIG…GYVL, and FFAF…IHLI. His-83 and His-97 together coordinate heme b. His-182 and His-196 together coordinate heme b. His-201 contributes to the a ubiquinone binding site. Transmembrane regions (helical) follow at residues 226–246, 288–308, 320–340, and 347–367; these read YKDL…ALFS, LGGV…PVLH, FSQF…WIGG, and FIII…ILVP.

This sequence belongs to the cytochrome b family. As to quaternary structure, the cytochrome bc1 complex contains 3 respiratory subunits (MT-CYB, CYC1 and UQCRFS1), 2 core proteins (UQCRC1 and UQCRC2) and probably 6 low-molecular weight proteins. Heme b serves as cofactor.

Its subcellular location is the mitochondrion inner membrane. Component of the ubiquinol-cytochrome c reductase complex (complex III or cytochrome b-c1 complex) that is part of the mitochondrial respiratory chain. The b-c1 complex mediates electron transfer from ubiquinol to cytochrome c. Contributes to the generation of a proton gradient across the mitochondrial membrane that is then used for ATP synthesis. The polypeptide is Cytochrome b (mt-cyb) (Astronotus ocellatus (Oscar)).